The sequence spans 234 residues: MIELFQLDKSLHFPPPAHALTDPPGLLAFGGDLSVNRLLHAYQQGIFPWFSANEPILWWSPDPRGILPLDNFSVSKSLRKFIRKTPLRVTVNRRFDEVIYACAKVKRQSSGTWITDDMINAYIELHRCGGAHSIEVWDDEELVGGLYGVTPGNVFCGESMFHYATNASKLAMFYLVELLRLNGCEFIDCQLQNDHLASLGCIEMPRAEFLNRLKEAVKHPMDQSLWLPRELTQP.

This sequence belongs to the L/F-transferase family.

It localises to the cytoplasm. The enzyme catalyses N-terminal L-lysyl-[protein] + L-leucyl-tRNA(Leu) = N-terminal L-leucyl-L-lysyl-[protein] + tRNA(Leu) + H(+). It catalyses the reaction N-terminal L-arginyl-[protein] + L-leucyl-tRNA(Leu) = N-terminal L-leucyl-L-arginyl-[protein] + tRNA(Leu) + H(+). The catalysed reaction is L-phenylalanyl-tRNA(Phe) + an N-terminal L-alpha-aminoacyl-[protein] = an N-terminal L-phenylalanyl-L-alpha-aminoacyl-[protein] + tRNA(Phe). In terms of biological role, functions in the N-end rule pathway of protein degradation where it conjugates Leu, Phe and, less efficiently, Met from aminoacyl-tRNAs to the N-termini of proteins containing an N-terminal arginine or lysine. The polypeptide is Leucyl/phenylalanyl-tRNA--protein transferase (Pseudoalteromonas atlantica (strain T6c / ATCC BAA-1087)).